The chain runs to 729 residues: MLYQSETLQLHWLENGIAELVFDAPGSVNKLDTKTVANLGEALNVLEKQSELKGLLLRSAKTALIVGADITEFLSLFNAPPEKLHQWLVFANTIFNRLEDLPVPTISAINGYALGGGCECILATDFRIASPEARIGLPETKLGIMPGFGGSVRLPRLLGADSALEIIATGKDVTANDALKIGLVDAVVDPEKLVGSALTMLKQAIDGKLDWQAARRPKLEPLKLNPTEAAMCFTIAKGRVMQVAGKHYPAPLTAVKTIEAAAKFGRTEALNLETNSFVPLAGSNEARALVGIFLNDQYVKAQAKKLSKGVAAPKLAAVLGAGIMGGGIAYQSALKSVPVIMKDINENSLDLGMNEAAKLLNKQLERGKVDGLKMASILATIRPTLDYAGIERAQVIVEAVVENPKVKAAVLAEVEALIGEDTVLASNTSTIPIDQLAKSLKRPENFCGMHFFNPVHRMPLVEIIRGAKTSDKTLAAVVAYATQMGKTPIVVNDCPGFFVNRVLFPYLAGFGMLVRDGGDFHQIDKVMEKQFGWPMGPAYLLDVVGIDTAHHAQAVMAAGFPERMNKDYRDAVDVMFDNQRFGQKNGQGFYRYTQDAKGKPRKENDEQVDKLLAEISQPLQEFSDEDIIARTMIPMINEVVRCLEEGIIASAAEGDMALVYGLGFPPFHGGVFRYLDTLGSANYVEMAQRYAHLGALYHVPAGLRAKAEHNESYYPVSAALLDVSTNQPA.

The interval 1–189 is enoyl-CoA hydratase/isomerase; the sequence is MLYQSETLQL…KIGLVDAVVD (189 aa). Aspartate 296 is a binding site for substrate. Residues 311–729 are 3-hydroxyacyl-CoA dehydrogenase; sequence AAPKLAAVLG…LLDVSTNQPA (419 aa). NAD(+)-binding positions include methionine 324, aspartate 343, 400-402, lysine 407, and serine 429; that span reads VVE. Histidine 450 serves as the catalytic For 3-hydroxyacyl-CoA dehydrogenase activity. Asparagine 453 provides a ligand contact to NAD(+). Substrate contacts are provided by asparagine 500 and tyrosine 660.

It in the N-terminal section; belongs to the enoyl-CoA hydratase/isomerase family. The protein in the C-terminal section; belongs to the 3-hydroxyacyl-CoA dehydrogenase family. As to quaternary structure, heterotetramer of two alpha chains (FadB) and two beta chains (FadA).

The enzyme catalyses a (3S)-3-hydroxyacyl-CoA + NAD(+) = a 3-oxoacyl-CoA + NADH + H(+). It catalyses the reaction a (3S)-3-hydroxyacyl-CoA = a (2E)-enoyl-CoA + H2O. It carries out the reaction a 4-saturated-(3S)-3-hydroxyacyl-CoA = a (3E)-enoyl-CoA + H2O. The catalysed reaction is (3S)-3-hydroxybutanoyl-CoA = (3R)-3-hydroxybutanoyl-CoA. The enzyme catalyses a (3Z)-enoyl-CoA = a 4-saturated (2E)-enoyl-CoA. It catalyses the reaction a (3E)-enoyl-CoA = a 4-saturated (2E)-enoyl-CoA. It participates in lipid metabolism; fatty acid beta-oxidation. Functionally, involved in the aerobic and anaerobic degradation of long-chain fatty acids via beta-oxidation cycle. Catalyzes the formation of 3-oxoacyl-CoA from enoyl-CoA via L-3-hydroxyacyl-CoA. It can also use D-3-hydroxyacyl-CoA and cis-3-enoyl-CoA as substrate. The sequence is that of Fatty acid oxidation complex subunit alpha from Yersinia pseudotuberculosis serotype O:1b (strain IP 31758).